A 324-amino-acid chain; its full sequence is Quinolinate synthase (324 aa).

The iminosuccinate site is built by H39 and S56. Residue C101 coordinates [4Fe-4S] cluster. Iminosuccinate-binding positions include 127-129 and S144; that span reads YIN. C187 lines the [4Fe-4S] cluster pocket. Residues 213 to 215 and T230 contribute to the iminosuccinate site; that span reads HPE. Residue C280 coordinates [4Fe-4S] cluster.

It belongs to the quinolinate synthase family. Type 2 subfamily. [4Fe-4S] cluster serves as cofactor.

It localises to the cytoplasm. The catalysed reaction is iminosuccinate + dihydroxyacetone phosphate = quinolinate + phosphate + 2 H2O + H(+). It participates in cofactor biosynthesis; NAD(+) biosynthesis; quinolinate from iminoaspartate: step 1/1. Catalyzes the condensation of iminoaspartate with dihydroxyacetone phosphate to form quinolinate. In Nostoc punctiforme (strain ATCC 29133 / PCC 73102), this protein is Quinolinate synthase.